A 219-amino-acid chain; its full sequence is Thiamine-phosphate synthase (219 aa).

4-amino-2-methyl-5-(diphosphooxymethyl)pyrimidine is bound by residues 44–48 and N79; that span reads QLREK. 2 residues coordinate Mg(2+): D80 and D99. Position 117 (S117) interacts with 4-amino-2-methyl-5-(diphosphooxymethyl)pyrimidine. 2-[(2R,5Z)-2-carboxy-4-methylthiazol-5(2H)-ylidene]ethyl phosphate is bound at residue 143-145; sequence TST. K146 contacts 4-amino-2-methyl-5-(diphosphooxymethyl)pyrimidine. Residues G175 and 195–196 contribute to the 2-[(2R,5Z)-2-carboxy-4-methylthiazol-5(2H)-ylidene]ethyl phosphate site; that span reads IS.

The protein belongs to the thiamine-phosphate synthase family. Mg(2+) serves as cofactor.

The catalysed reaction is 2-[(2R,5Z)-2-carboxy-4-methylthiazol-5(2H)-ylidene]ethyl phosphate + 4-amino-2-methyl-5-(diphosphooxymethyl)pyrimidine + 2 H(+) = thiamine phosphate + CO2 + diphosphate. It catalyses the reaction 2-(2-carboxy-4-methylthiazol-5-yl)ethyl phosphate + 4-amino-2-methyl-5-(diphosphooxymethyl)pyrimidine + 2 H(+) = thiamine phosphate + CO2 + diphosphate. It carries out the reaction 4-methyl-5-(2-phosphooxyethyl)-thiazole + 4-amino-2-methyl-5-(diphosphooxymethyl)pyrimidine + H(+) = thiamine phosphate + diphosphate. The protein operates within cofactor biosynthesis; thiamine diphosphate biosynthesis; thiamine phosphate from 4-amino-2-methyl-5-diphosphomethylpyrimidine and 4-methyl-5-(2-phosphoethyl)-thiazole: step 1/1. Its function is as follows. Condenses 4-methyl-5-(beta-hydroxyethyl)thiazole monophosphate (THZ-P) and 2-methyl-4-amino-5-hydroxymethyl pyrimidine pyrophosphate (HMP-PP) to form thiamine monophosphate (TMP). In Bacillus mycoides (strain KBAB4) (Bacillus weihenstephanensis), this protein is Thiamine-phosphate synthase.